We begin with the raw amino-acid sequence, 503 residues long: Nuclear respiratory factor 1 (503 aa).

The interval 1 to 78 (MEEHGVTQTE…AHLAAAGPVG (78 aa)) is dimerization. Residues 36–57 (SMLSADEDSPSSPEDTSYDDSD) form a disordered region. Phosphoserine; by CK2 is present on residues Ser39, Ser44, Ser46, Ser47, and Ser52. Positions 88–116 (GKKRKRPHVFESNPSIRKRQQTRLLRKLR) match the Nuclear localization signal motif. The DNA-binding element occupies 109–305 (TRLLRKLRAT…SIAHLVPSQT (197 aa)). A Glycyl lysine isopeptide (Lys-Gly) (interchain with G-Cter in SUMO2) cross-link involves residue Lys139. The tract at residues 301 to 476 (VPSQTVVQTF…AQGNGPVQVA (176 aa)) is required for transcriptional activation.

The protein belongs to the NRF1/Ewg family. Homodimer. Binds DNA as a dimer. Interacts with PPRC1. In terms of processing, phosphorylation enhances DNA binding. In terms of tissue distribution, ubiquitously expressed with strongest expression in skeletal muscle.

The protein resides in the nucleus. Its function is as follows. Transcription factor that activates the expression of the EIF2S1 (EIF2-alpha) gene. Links the transcriptional modulation of key metabolic genes to cellular growth and development. Implicated in the control of nuclear genes required for respiration, heme biosynthesis, and mitochondrial DNA transcription and replication. The chain is Nuclear respiratory factor 1 (NRF1) from Homo sapiens (Human).